Consider the following 234-residue polypeptide: Peptidyl-prolyl cis-trans isomerase FKBP17-3, chloroplastic (234 aa).

The N-terminal 28 residues, M1–S28, are a transit peptide targeting the chloroplast. The region spanning G130–Y228 is the PPIase FKBP-type domain.

Belongs to the FKBP-type PPIase family.

It localises to the plastid. It is found in the chloroplast thylakoid lumen. The catalysed reaction is [protein]-peptidylproline (omega=180) = [protein]-peptidylproline (omega=0). In terms of biological role, PPIases accelerate the folding of proteins. It catalyzes the cis-trans isomerization of proline imidic peptide bonds in oligopeptides. The protein is Peptidyl-prolyl cis-trans isomerase FKBP17-3, chloroplastic (FKBP17-3) of Arabidopsis thaliana (Mouse-ear cress).